The chain runs to 364 residues: tRNA N6-adenosine threonylcarbamoyltransferase (364 aa).

2 residues coordinate Fe cation: histidine 118 and histidine 122. Residues 140 to 144, aspartate 173, glycine 186, and asparagine 288 contribute to the substrate site; that span reads LVSGG. Aspartate 316 contributes to the Fe cation binding site.

It belongs to the KAE1 / TsaD family. It depends on Fe(2+) as a cofactor.

Its subcellular location is the cytoplasm. It carries out the reaction L-threonylcarbamoyladenylate + adenosine(37) in tRNA = N(6)-L-threonylcarbamoyladenosine(37) in tRNA + AMP + H(+). Required for the formation of a threonylcarbamoyl group on adenosine at position 37 (t(6)A37) in tRNAs that read codons beginning with adenine. Is involved in the transfer of the threonylcarbamoyl moiety of threonylcarbamoyl-AMP (TC-AMP) to the N6 group of A37, together with TsaE and TsaB. TsaD likely plays a direct catalytic role in this reaction. This chain is tRNA N6-adenosine threonylcarbamoyltransferase, found in Cereibacter sphaeroides (strain KD131 / KCTC 12085) (Rhodobacter sphaeroides).